Consider the following 199-residue polypeptide: MIGCLIGEVFALEAPTVLLNVNGVGYEIDTPLSTFCQLQKGQKVTLWTHLVVREDAQQLYGFSDAQEKTIFRTLLKVNGVGPKMALGILSTLSVELLVHTIEHDDVNTLVKVPGVGKKTAERLMIELRDRFKTLAQGTSSAAALPQIQFVSNSPVAEAEAALQSLGYKPLEAQKAVAAVKADYTESADIIRAALKSMMK.

Residues 1–63 (MIGCLIGEVF…EDAQQLYGFS (63 aa)) are domain I. The domain II stretch occupies residues 64–142 (DAQEKTIFRT…TLAQGTSSAA (79 aa)). Residues 143-150 (ALPQIQFV) are flexible linker. The domain III stretch occupies residues 150–199 (VSNSPVAEAEAALQSLGYKPLEAQKAVAAVKADYTESADIIRAALKSMMK).

It belongs to the RuvA family. In terms of assembly, homotetramer. Forms an RuvA(8)-RuvB(12)-Holliday junction (HJ) complex. HJ DNA is sandwiched between 2 RuvA tetramers; dsDNA enters through RuvA and exits via RuvB. An RuvB hexamer assembles on each DNA strand where it exits the tetramer. Each RuvB hexamer is contacted by two RuvA subunits (via domain III) on 2 adjacent RuvB subunits; this complex drives branch migration. In the full resolvosome a probable DNA-RuvA(4)-RuvB(12)-RuvC(2) complex forms which resolves the HJ.

It is found in the cytoplasm. Functionally, the RuvA-RuvB-RuvC complex processes Holliday junction (HJ) DNA during genetic recombination and DNA repair, while the RuvA-RuvB complex plays an important role in the rescue of blocked DNA replication forks via replication fork reversal (RFR). RuvA specifically binds to HJ cruciform DNA, conferring on it an open structure. The RuvB hexamer acts as an ATP-dependent pump, pulling dsDNA into and through the RuvAB complex. HJ branch migration allows RuvC to scan DNA until it finds its consensus sequence, where it cleaves and resolves the cruciform DNA. This Acinetobacter baumannii (strain AB307-0294) protein is Holliday junction branch migration complex subunit RuvA.